The sequence spans 1037 residues: Multidrug resistance protein MdtF (1037 aa).

At 1–9 (MANYFIDRP) the chain is on the cytoplasmic side. A helical membrane pass occupies residues 10–30 (VFAWVLAIIMMLAGGLAIMNL). Residues 31–338 (PVAQYPQIAP…TTPFIEISIQ (308 aa)) lie on the Periplasmic side of the membrane. Residues 339 to 359 (EVFKTLVEAIILVFLVMYLFL) traverse the membrane as a helical segment. Topologically, residues 360–369 (QNFRATIIPT) are cytoplasmic. Residues 370–390 (IAVPVVILGTFAILSAVGFTI) form a helical membrane-spanning segment. The Periplasmic portion of the chain corresponds to 391-392 (NT). A helical membrane pass occupies residues 393 to 413 (LTMFGMVLAIGLLVDDAIVVV). At 414-441 (ENVERVIAEDKLPPKEATHKSMGQIQRA) the chain is on the cytoplasmic side. The chain crosses the membrane as a helical span at residues 442–462 (LVGIAVVLSAVFMPMAFMSGA). At 463 to 471 (TGEIYRQFS) the chain is on the periplasmic side. A helical transmembrane segment spans residues 472 to 492 (ITLISSMLLSVFVAMSLTPAL). Topologically, residues 493 to 534 (CATILKAAPEGGHKPNALFARFNTLFEKSTQHYTDSTRSLLR) are cytoplasmic. A helical membrane pass occupies residues 535–555 (CTGRYMVIYLLICAGMAVLFL). Topologically, residues 556 to 870 (RTPTSFLPEE…SYQEALSSNQ (315 aa)) are periplasmic. The chain crosses the membrane as a helical span at residues 871–891 (APALYAISLVVVFLALAALYE). Serine 892 is a topological domain (cytoplasmic). The chain crosses the membrane as a helical span at residues 893–913 (WSIPFSVMLVVPLGVVGALLA). The Periplasmic portion of the chain corresponds to 914-927 (TDLRGLSNDVYFQV). Residues 928–948 (GLLTTIGLSAKNAILIVEFAV) traverse the membrane as a helical segment. Over 949-972 (EMMQKEGKTPIEAIIEAARMRLRP) the chain is Cytoplasmic. A helical transmembrane segment spans residues 973–993 (ILMTSLAFILGVLPLVISHGA). Residues 994-1006 (GSGAQNAVGTGVM) lie on the Periplasmic side of the membrane. The helical transmembrane segment at 1007 to 1027 (GGMFAATVLAIYFVPVFFVVV) threads the bilayer. Residues 1028 to 1037 (EHLFARFKKA) are Cytoplasmic-facing.

It belongs to the resistance-nodulation-cell division (RND) (TC 2.A.6) family. In terms of assembly, homotrimer. Part of the tripartite efflux system MdtEF-TolC, which is composed of an inner membrane transporter, MdtF, a membrane fusion protein, MdtE, and an outer membrane component, TolC. The complex forms a large protein conduit and can translocate molecules across both the inner and outer membranes.

It is found in the cell inner membrane. Its function is as follows. Part of the tripartite efflux system MdtEF-TolC, which confers resistance to various compounds. This is Multidrug resistance protein MdtF (mdtF) from Escherichia coli O157:H7.